The sequence spans 390 residues: 4-hydroxy-3-methylbut-2-en-1-yl diphosphate synthase (flavodoxin) (390 aa).

[4Fe-4S] cluster contacts are provided by cysteine 281, cysteine 284, cysteine 316, and glutamate 323.

This sequence belongs to the IspG family. Requires [4Fe-4S] cluster as cofactor.

It carries out the reaction (2E)-4-hydroxy-3-methylbut-2-enyl diphosphate + oxidized [flavodoxin] + H2O + 2 H(+) = 2-C-methyl-D-erythritol 2,4-cyclic diphosphate + reduced [flavodoxin]. Its pathway is isoprenoid biosynthesis; isopentenyl diphosphate biosynthesis via DXP pathway; isopentenyl diphosphate from 1-deoxy-D-xylulose 5-phosphate: step 5/6. Converts 2C-methyl-D-erythritol 2,4-cyclodiphosphate (ME-2,4cPP) into 1-hydroxy-2-methyl-2-(E)-butenyl 4-diphosphate. This is 4-hydroxy-3-methylbut-2-en-1-yl diphosphate synthase (flavodoxin) from Salinispora arenicola (strain CNS-205).